Consider the following 174-residue polypeptide: V-type proton ATPase catalytic subunit A (174 aa).

Belongs to the ATPase alpha/beta chains family. V-ATPase is a heteromultimeric enzyme made up of two complexes: the ATP-hydrolytic V1 complex and the proton translocation V0 complex. The V1 complex consists of three catalytic AB heterodimers that form a heterohexamer, three peripheral stalks each consisting of EG heterodimers, one central rotor including subunits D and F, and the regulatory subunits C and H. The proton translocation complex V0 consists of the proton transport subunit a, a ring of proteolipid subunits c9c'', rotary subunit d, subunits e and f, and the accessory subunits ATP6AP1/Ac45 and ATP6AP2/PRR. Interacts with the V0 complex V-ATPase subunit a4 ATP6V0A4. Interacts with WFS1. Interacts with alpha-crystallin B chain/CRYAB and with MTOR, forming a ternary complex.

The protein localises to the cytoplasm. The protein resides in the cytosol. It localises to the cytoplasmic vesicle. Its subcellular location is the secretory vesicle. It is found in the clathrin-coated vesicle membrane. The protein localises to the lysosome. The catalysed reaction is ATP + H2O + 4 H(+)(in) = ADP + phosphate + 5 H(+)(out). ATP hydrolysis occurs at the interface between the nucleotide-binding domains of subunits A and B. ATP hydrolysis triggers a conformational change in the subunits D and F, which induces a shift of subunit d. The c-ring is subsequently rotated and results in a continuous proton translocation across the membrane. In terms of biological role, catalytic subunit of the V1 complex of vacuolar(H+)-ATPase (V-ATPase), a multisubunit enzyme composed of a peripheral complex (V1) that hydrolyzes ATP and a membrane integral complex (V0) that translocates protons. V-ATPase is responsible for acidifying and maintaining the pH of intracellular compartments and in some cell types, is targeted to the plasma membrane, where it is responsible for acidifying the extracellular environment. In aerobic conditions, involved in intracellular iron homeostasis, thus triggering the activity of Fe(2+) prolyl hydroxylase (PHD) enzymes, and leading to HIF1A hydroxylation and subsequent proteasomal degradation. May play a role in neurite development and synaptic connectivity. In Mesocricetus auratus (Golden hamster), this protein is V-type proton ATPase catalytic subunit A.